The chain runs to 2077 residues: MGERDNPTVPVTTLAGLTSTSDLLSELPVADSLQSAASLNKSLLFHALVANESSNLLSMRNENLVRQLVTAIERTNSDNIELIHCPVQDTATNCSTYPELLQGIYHFRPAVFNTSIKIHSPDQHTANARLEAKKMQIDSYSIPECYASPTNLSISNEHQLQDAQACFNQLTSMTSKEILEEFSQINFKENATEKDKIDVIENSDLNVTKILSQNTLKKKSNTPERSTVQSIQEQFFIQQQEANYNLKHDLNQVSTNVGQIQNISDTFPQEPSNFNLNSVNIPNMLYVQSPPFTESEPTQAHHSSIEYLKKKKSQILDVSILNRQQVLENTSLHIINKSSTYQTNQNVSTTTSTSTSSSGKSQVRVCINRLSIEDSRLMQQSIKKFVQKSPELARSMGLLQETCQQQHENLNIIPTSAEECVLESRASSTNNTVKIPIDTFSTIKADEKRSAKRKLAISIGDIPPEQIFSKPKMRRVERITPLSNTKCVKEEVTRSQTYQQFIRNMDHIIEILDDSESPNFDSEDVDETIECISSKLLNSMSTDVAKLKAKQALDSIPKNKLTLLINYAMRNVYLARNYFAGTEDEDEFVDDEVIEKLLNAMDACLLICNIYSTVSDLQFLQEDNVSHIIKFTQFQLRETIFPLHDPVYTAKSIKRTTHRKKIKSHQAQNRSMQLFYLKTVELLKVFVTLFDKCVFVDTIVLPLSTLAIEPFFVDNIETLQFVCLELVTTIFRKERYDKIRNSILGDILTSIDRLPSSKKNLRPYKLTNNGGNIQMVTALVLQLIQCATILPDSLCDNGKFSNKPQEGNTFDEEGKKLLQPSQDLLVLQKYDVAVSIGGNFLTTFLNKCKSRSNETDFRPLFENFIHDLLATVNKPEWPASELLLSLLGTMLVRYVSDKGIEQSIRLVSLDYLGIVAARLRKDTVESRCRVNIIDSMIQSIKLEQEKEGDVTSNNDQFDLEPEEQRTDFLQKILLDFLAVNAQEENLIWDYARHFYLAQWYRDVIYQRRRINDGKKGLAFRKSKIRNNRRTNGDYLDTSDSGSCDESDTDTNKKRIHCVDSNDFELNINIYKALEARKQYFINKIKPFSVFGEQNHSSNQHIKTYIDYNNAQLIAQYLATKRPFSQSFDGCLKKIILVVNEPSIAVRTRAMKCLANIVEVDPLVLKRKDMQMGVNQKFLDTAISVREAAVDLVGKFVLSNQDLIDQYYDMLSTRILDTGVSVRKRVIKILRDICLEYPDFSKIPEICVKMIRRVHDEEGIQKLVTEVFMKMWFTPCTKNDKIGIQRKINHIIDVVNTAHDTGTTWLEGLLMSIFKPRDNMLRSEGCVQEFIKKNSEPPMDIVIACQQLADGLVDRLIELEDTDNSRMLGCITTLHLLAKVRPQLLVKHAITIEPYLNIKCHSATAAKFICAVADILEKVVPLVNNASESFLASLEEHLMLLVVSRNQAEVTSCVSCLGALVNKITHNFKLIRDCFQKFYRVLDVSRSQVIQGNNSVDNIYTPSFRRSLFTIGILMRYFDFKSPIALGETNDGLPVSICEDVFHCLMFFCRCTNQEIRKQALISLGSFCVLNDGYLTRSELKNLYCEILSSIANDAGFKIICMRNIWIYLTESEMFMHNKEKEWEKQSKHEDLKEMNDVSSGMASRIIQLYLEEILECFLNRDDTVRLWAVKVIQIVLRQGLVHPVRMVPYLICLSTDHRIESAHRADALLKDIDKTYSGFVNMKVQFGLQLCFKLQKILQINNRGKLEIIRGYASRGPDNTTTALNDFLYTLLRTTKPQRRALVQTVTKQFDDQKTSLQQMLYIADNLAYFPYVVQDEPLYLIHQIDLLISMAGTHLLATFKEHIKPSDKEGDVLEDDDDVEDPEVLFNRLPEDLTEIIKCITSAQACMLLLILKDHLKEMYAITDSKISRYSPSEQKLYEKAVTRKSVNDFNPKTTIDVIKKQMSQEKLSTDINFTLTKEEKLDLVVKYLDFKQLMLKLDPDDGDSDADESRDKTMLNISASSDGVAFSSSAKNSHSACDGYSLTVTDVVDVPMSHIAKASMLTSKPSGRKTNPVRTKKKRRKIDSTDDETSDAEYA.

Positions 1030 to 1049 are disordered; sequence TNGDYLDTSDSGSCDESDTD. 7 HEAT repeats span residues 1128 to 1159, 1167 to 1198, 1200 to 1235, 1240 to 1273, 1538 to 1569, 1647 to 1678, and 1684 to 1715; these read DGCL…IVEV, KDMQ…FVLS, QDLI…ICLE, SKIP…MWFT, EDVF…FCVL, QLYL…VLRQ, and VRMV…IDKT. 2 positions are modified to phosphoserine: Ser1986 and Ser1991. Residues 2039 to 2077 are disordered; that stretch reads KASMLTSKPSGRKTNPVRTKKKRRKIDSTDDETSDAEYA. The segment covering 2042–2055 has biased composition (polar residues); that stretch reads MLTSKPSGRKTNPV. Ser2066 carries the post-translational modification Phosphoserine. The residue at position 2067 (Thr2067) is a Phosphothreonine. Residues 2067-2077 show a composition bias toward acidic residues; sequence TDDETSDAEYA.

This sequence belongs to the SCC2/Nipped-B family. As to expression, ubiquitous. Expressed in all interphase nuclei in embryo, third instar imaginal disks, salivary glands and fat tissues.

The protein localises to the nucleus. Plays a structural role in chromatin. Involved in sister chromatid cohesion, probably via an interaction with the cohesin complex. Participates in the transcriptional activation mediated by remote enhancers on genes such as cut and Ubx, possibly by alleviating the cohesin-mediated blocking of enhancer-promoter communication. This chain is Nipped-B protein (Nipped-B), found in Drosophila melanogaster (Fruit fly).